The chain runs to 185 residues: Ribosome-recycling factor (185 aa).

It belongs to the RRF family.

It is found in the cytoplasm. Its function is as follows. Responsible for the release of ribosomes from messenger RNA at the termination of protein biosynthesis. May increase the efficiency of translation by recycling ribosomes from one round of translation to another. This is Ribosome-recycling factor from Roseiflexus sp. (strain RS-1).